A 166-amino-acid chain; its full sequence is Gem-associated protein 6 (166 aa).

The Sm domain maps to tryptophan 4–glycine 73. Positions glutamate 68 to glutamine 166 constitute an AD domain. Phosphoserine is present on residues serine 94 and serine 165.

As to quaternary structure, part of the core SMN complex that contains SMN1, GEMIN2/SIP1, DDX20/GEMIN3, GEMIN4, GEMIN5, GEMIN6, GEMIN7, GEMIN8 and STRAP/UNRIP. Part of the SMN-Sm complex that contains SMN1, GEMIN2/SIP1, DDX20/GEMIN3, GEMIN4, GEMIN5, GEMIN6, GEMIN7, GEMIN8, STRAP/UNRIP and the Sm proteins SNRPB, SNRPD1, SNRPD2, SNRPD3, SNRPE, SNRPF and SNRPG. Interacts with GEMIN7; the interaction is direct. Interacts with GEMIN8; the interaction is direct. Interacts with SNRPB, SNRPD2, SNRPD3 and SNRPE; the interaction is direct.

The protein localises to the nucleus. The protein resides in the nucleoplasm. It localises to the gem. Its subcellular location is the cytoplasm. In terms of biological role, the SMN complex catalyzes the assembly of small nuclear ribonucleoproteins (snRNPs), the building blocks of the spliceosome, and thereby plays an important role in the splicing of cellular pre-mRNAs. Most spliceosomal snRNPs contain a common set of Sm proteins SNRPB, SNRPD1, SNRPD2, SNRPD3, SNRPE, SNRPF and SNRPG that assemble in a heptameric protein ring on the Sm site of the small nuclear RNA to form the core snRNP (Sm core). In the cytosol, the Sm proteins SNRPD1, SNRPD2, SNRPE, SNRPF and SNRPG are trapped in an inactive 6S pICln-Sm complex by the chaperone CLNS1A that controls the assembly of the core snRNP. To assemble core snRNPs, the SMN complex accepts the trapped 5Sm proteins from CLNS1A forming an intermediate. Binding of snRNA inside 5Sm triggers eviction of the SMN complex, thereby allowing binding of SNRPD3 and SNRPB to complete assembly of the core snRNP. The protein is Gem-associated protein 6 (Gemin6) of Mus musculus (Mouse).